The sequence spans 60 residues: UPF0434 protein YcaR (60 aa).

It belongs to the UPF0434 family.

This Escherichia coli O81 (strain ED1a) protein is UPF0434 protein YcaR.